The sequence spans 330 residues: Malate dehydrogenase (330 aa).

An NAD(+)-binding site is contributed by 13–19 (GAAGQIG). Substrate is bound by residues R94 and R100. Residues N107, Q114, and 131 to 133 (VGN) each bind NAD(+). Substrate is bound by residues N133 and R164. The active-site Proton acceptor is the H189.

This sequence belongs to the LDH/MDH superfamily. MDH type 2 family.

The catalysed reaction is (S)-malate + NAD(+) = oxaloacetate + NADH + H(+). Its function is as follows. Catalyzes the reversible oxidation of malate to oxaloacetate. The chain is Malate dehydrogenase from Deinococcus deserti (strain DSM 17065 / CIP 109153 / LMG 22923 / VCD115).